A 356-amino-acid polypeptide reads, in one-letter code: uncharacterized protein (356 aa).

Transmembrane regions (helical) follow at residues 2 to 22, 35 to 55, 74 to 94, 99 to 119, 124 to 144, and 154 to 174; these read FEAFIYNISVIVAGIYLFHRL, AYVTVLMTIVSLLLSVYPIPY, FTNMVYTLSATVIVAIVEIVV, IMYGVTLIVIAAVTSAIGPFL, VLSLLILNVVTIIILFGVALV, and IILIPISLIITLASAITFVDI. Positions 218 to 353 constitute a GGDEF domain; that stretch reads QSIALLLIDI…GRNKVMFNPI (136 aa).

The protein localises to the cell membrane. This is an uncharacterized protein from Staphylococcus aureus (strain bovine RF122 / ET3-1).